A 137-amino-acid polypeptide reads, in one-letter code: MRTLWIVAVCLIGVEGSLLEFGKMILEETGKLAIPSYSSYGCYCGWGGKGTPKDATDRCCFVHDCCYGNLPDCNPKSDRYKYKRVNGAIVCEKGTSCENRICECDKAAAICFRQNLNTYSKKYMLYPDFLCKGELRC.

A signal peptide spans 1 to 16 (MRTLWIVAVCLIGVEG). Cystine bridges form between C42-C131, C44-C60, C59-C111, C65-C137, C66-C104, C73-C97, and C91-C102. Residues Y43, G45, and G47 each coordinate Ca(2+). The active site involves H63. D64 is a Ca(2+) binding site. The active site involves D105.

It belongs to the phospholipase A2 family. Group II subfamily. D49 sub-subfamily. Ca(2+) is required as a cofactor. Expressed by the venom gland.

It localises to the secreted. It catalyses the reaction a 1,2-diacyl-sn-glycero-3-phosphocholine + H2O = a 1-acyl-sn-glycero-3-phosphocholine + a fatty acid + H(+). Functionally, snake venom phospholipase A2 (PLA2) that is neurotoxic. PLA2 catalyzes the calcium-dependent hydrolysis of the 2-acyl groups in 3-sn-phosphoglycerides. The polypeptide is Basic phospholipase A2 DsM-S1 (Daboia siamensis (Eastern Russel's viper)).